The primary structure comprises 161 residues: Large ribosomal subunit protein uL15 (161 aa).

The segment at 1–43 (MKLSDIADNAGARKKRMRVGRGIGSGKGKTSGRGGKGQTARSG) is disordered. Residues 21–37 (RGIGSGKGKTSGRGGKG) are compositionally biased toward gly residues.

Belongs to the universal ribosomal protein uL15 family. As to quaternary structure, part of the 50S ribosomal subunit.

Binds to the 23S rRNA. This Bradyrhizobium sp. (strain BTAi1 / ATCC BAA-1182) protein is Large ribosomal subunit protein uL15.